The primary structure comprises 1176 residues: Histidine kinase 2 (1176 aa).

Residues 1–29 (MSITCELLNLTSKKAKKSSSSDKKWLKKP) lie on the Cytoplasmic side of the membrane. Residues 30–50 (LFFLILCGSLVIVLVMFLRLG) form a helical membrane-spanning segment. Residues 51–174 (RSQKEETDSC…LEQGLSSYLR (124 aa)) lie on the Extracellular side of the membrane. The helical transmembrane segment at 175–195 (NAWWCLILGVLVCHKIYVSHS) threads the bilayer. Over 196–232 (KARGERKEKVHLQEALAPKKQQQRAQTSSRGAGRWRK) the chain is Cytoplasmic. A helical transmembrane segment spans residues 233 to 253 (NILLLGILGGVSFSVWWFWDT). Residues 254–536 (NEEIIMKRRE…CRFKHKLPIP (283 aa)) are Extracellular-facing. Residues 302 to 526 (IPSAIDQRTF…GDPSRNHEMH (225 aa)) enclose the CHASE domain. A helical membrane pass occupies residues 537–557 (WTAITPSILVLVITFLVGYIL). The Cytoplasmic portion of the chain corresponds to 558 to 1176 (YEAINRIATV…TAVARFFEPC (619 aa)). The 274-residue stretch at 594–867 (TVSHEIRTPM…TFSFTGVFGK (274 aa)) folds into the Histidine kinase domain. His597 carries the phosphohistidine; by autocatalysis modification. Response regulatory domains follow at residues 891 to 1013 (RALV…QETL) and 1036 to 1173 (QILV…ARFF). Residues Asp942 and Asp1086 each carry the 4-aspartylphosphate modification.

As to quaternary structure, self-interacts. Interacts with AHK3, AHP1, AHP2, AHP3, AHP5, ATAF2, AT2S3, BETAA-AD, CYP20-2, DRP1A, HIR1, HIR2, PI4KB1, PI4KG5 and At4g12060. Post-translationally, autophosphorylated predominantly on His residues. Activation probably requires a transfer of a phosphate group between a His in the transmitter domain and an Asp of the receiver domain. In terms of tissue distribution, expressed in roots, leaves and flowers, mostly in the vascular tissues. Present in seedlings.

It localises to the endoplasmic reticulum membrane. The catalysed reaction is ATP + protein L-histidine = ADP + protein N-phospho-L-histidine.. Activated by cytokinins to initiate phosphorelay signaling. Its function is as follows. Cytokinins (CK) receptor related to bacterial two-component regulators. Functions as a histidine kinase and transmits the stress signal to a downstream MAPK cascade. This protein undergoes an ATP-dependent autophosphorylation at a conserved histidine residue in the kinase core, and a phosphoryl group is then transferred to a conserved aspartate residue in the receiver domain. In the presence of cytokinin, feeds phosphate to phosphorelay-integrating histidine phosphotransfer protein (HPt) and activates subsequent cascade. Involved in meristems establishment in seedlings. Redundant negative regulator of drought and salt stress responses and abscisic acid (ABA) signaling. Together with AHK3, plays a negative regulatory role in cold stress signaling via inhibition of ABA response, occurring independently of the cold acclimation pathway. Redundant positive regulator of cytokinin signaling that regulates many developmental processes including seed germination, cell division, seed size, chlorophyll retention during leaf senescence, root repression and shoot promotion. Involved in alkamides (e.g. N-isobutyl decanamide) and N-acylethanolamides (NAE) signaling that control meristematic activity and differentiation processes during plant development. Contributes to vascular bundle formation and secondary growth in a cytokinin-dependent manner, probably by promoting the maintenance of mitotic activity and/or identity of procambial cells. Together with AHK4, required for growth and reproduction promotion stimulated by the endophytic fungus Piriformospora indica in a trans-zeatin-dependent manner. Required by the cytokinin-dependent flower development regulation pathway. This Arabidopsis thaliana (Mouse-ear cress) protein is Histidine kinase 2 (AHK2).